The primary structure comprises 78 residues: Defensin beta 136 (78 aa).

The signal sequence occupies residues Met-1–Gly-21. 3 disulfides stabilise this stretch: Cys-33–Cys-60, Cys-40–Cys-54, and Cys-44–Cys-61.

Belongs to the beta-defensin family.

The protein resides in the secreted. Its function is as follows. Host defense peptide that exhibits antimicrobial and antifungal activity. Exhibits antimicrobial activity against E.coli, S.aureus and C.albicans (in vitro). Has high lipopolysaccharide (LPS)-binding affinity, and may thereby be involved in immunoregulation through LPS neutralization. The chain is Defensin beta 136 (DEFB136) from Pan troglodytes (Chimpanzee).